The sequence spans 35 residues: Cupiennin-2e (35 aa).

Glutamate 35 carries the glutamic acid 1-amide modification.

In terms of tissue distribution, expressed by the venom gland.

It is found in the secreted. This Cupiennius salei (American wandering spider) protein is Cupiennin-2e.